Reading from the N-terminus, the 310-residue chain is Putative S-adenosyl-L-methionine-dependent methyltransferase ML2640 (310 aa).

S-adenosyl-L-methionine-binding positions include aspartate 132 and 161–162 (DL).

It belongs to the UPF0677 family.

In terms of biological role, exhibits S-adenosyl-L-methionine-dependent methyltransferase activity. The protein is Putative S-adenosyl-L-methionine-dependent methyltransferase ML2640 of Mycobacterium leprae (strain TN).